The sequence spans 273 residues: Outer surface protein A (273 aa).

The N-terminal stretch at 1–16 (MKKYLLGIGLILALIA) is a signal peptide. The N-palmitoyl cysteine moiety is linked to residue Cys-17. Cys-17 is lipidated: S-diacylglycerol cysteine.

This sequence belongs to the OspA lipoprotein family.

The protein resides in the cell outer membrane. The protein localises to the cell surface. The sequence is that of Outer surface protein A from Borreliella burgdorferi (Lyme disease spirochete).